The following is a 200-amino-acid chain: Putative manganese exporter (200 aa).

A run of 6 helical transmembrane segments spans residues 13–33 (TEHV…AEIG), 53–73 (IIAA…WLGV), 81–101 (PDIL…WILI), 110–130 (SIST…AEIG), 150–170 (WVIV…VLIG), and 180–200 (GLIR…TAFF).

It belongs to the GDT1 family.

It is found in the cell inner membrane. Involved in manganese homeostasis. May function as a manganese exporter. This Vibrio cholerae serotype O1 (strain ATCC 39541 / Classical Ogawa 395 / O395) protein is Putative manganese exporter.